Here is a 111-residue protein sequence, read N- to C-terminus: Cell cycle protein GpsB (111 aa).

Residues 38-72 (IKDYEAFHKEFEQLKQQNARLKRELEEQKLAATQV) are a coiled coil.

Belongs to the GpsB family. Forms polymers through the coiled coil domains. Interacts with PBP1, MreC and EzrA.

Its subcellular location is the cytoplasm. In terms of biological role, divisome component that associates with the complex late in its assembly, after the Z-ring is formed, and is dependent on DivIC and PBP2B for its recruitment to the divisome. Together with EzrA, is a key component of the system that regulates PBP1 localization during cell cycle progression. Its main role could be the removal of PBP1 from the cell pole after pole maturation is completed. Also contributes to the recruitment of PBP1 to the division complex. Not essential for septum formation. The polypeptide is Cell cycle protein GpsB (Bacillus cereus (strain ATCC 10987 / NRS 248)).